Consider the following 452-residue polypeptide: Phosphoglucosamine mutase (452 aa).

Serine 104 acts as the Phosphoserine intermediate in catalysis. Mg(2+) is bound by residues serine 104, aspartate 245, aspartate 247, and aspartate 249. Serine 104 bears the Phosphoserine mark.

Belongs to the phosphohexose mutase family. Mg(2+) serves as cofactor. In terms of processing, activated by phosphorylation.

It catalyses the reaction alpha-D-glucosamine 1-phosphate = D-glucosamine 6-phosphate. Catalyzes the conversion of glucosamine-6-phosphate to glucosamine-1-phosphate. In Gluconacetobacter diazotrophicus (strain ATCC 49037 / DSM 5601 / CCUG 37298 / CIP 103539 / LMG 7603 / PAl5), this protein is Phosphoglucosamine mutase.